Reading from the N-terminus, the 180-residue chain is 3-hydroxyanthranilate 3,4-dioxygenase (180 aa).

Arg-44 serves as a coordination point for O2. 3 residues coordinate Fe cation: His-48, Glu-54, and His-92. Glu-54 serves as a coordination point for substrate. Positions 96 and 106 each coordinate substrate. 4 residues coordinate a divalent metal cation: Cys-121, Cys-124, Cys-158, and Cys-161.

This sequence belongs to the 3-HAO family. Fe(2+) is required as a cofactor.

The protein localises to the cytoplasm. It catalyses the reaction 3-hydroxyanthranilate + O2 = (2Z,4Z)-2-amino-3-carboxymuconate 6-semialdehyde. The protein operates within cofactor biosynthesis; NAD(+) biosynthesis; quinolinate from L-kynurenine: step 3/3. Its function is as follows. Catalyzes the oxidative ring opening of 3-hydroxyanthranilate to 2-amino-3-carboxymuconate semialdehyde, which spontaneously cyclizes to quinolinate. In Neurospora crassa (strain ATCC 24698 / 74-OR23-1A / CBS 708.71 / DSM 1257 / FGSC 987), this protein is 3-hydroxyanthranilate 3,4-dioxygenase (bna1).